Reading from the N-terminus, the 260-residue chain is Putative protein phosphatase 2C-like protein 44 (260 aa).

Residues 41 to 259 (YYTVDRLSYA…SSISCVVIRF (219 aa)) form the PPM-type phosphatase domain.

The protein belongs to the PP2C family.

This is Putative protein phosphatase 2C-like protein 44 from Arabidopsis thaliana (Mouse-ear cress).